The following is a 90-amino-acid chain: Barrier-to-autointegration factor-like protein (90 aa).

Belongs to the BAF family. Homodimer. Heterodimerizes with BANF1. In terms of tissue distribution, expressed strongly in testis and pancreas. Also detected in brain, colon, liver, lung, ovary, placenta, prostate, small intestine, spleen and thymus. Not detected in heart, kidney and skeletal muscle.

It is found in the nucleus. It localises to the cytoplasm. May play a role in BANF1 regulation and influence tissue-specific roles of BANF1. The protein is Barrier-to-autointegration factor-like protein (BANF2) of Homo sapiens (Human).